The chain runs to 485 residues: Aerolysin-5 (485 aa).

A signal peptide spans 1–23 (MQKLKITGLSLIISGLLMAQRHA). Cystine bridges form between Cys42–Cys98 and Cys182–Cys187. The interaction with host N-linked glycan stretch occupies residues 68-84 (WQISGLANGWVIMGPVY). The part of the transmembrane beta-barrel after proteolytic activation of the toxin and insertion into the host membrane stretch occupies residues 256 to 288 (YGLSEKVTTKNKFKWPLVGETELSIEIAANQSW). The segment at 346–355 (RWGGNAWYTH) is interaction with glycans from host GPI-anchor. Positions 446 to 485 (AADGKAPRALSARRGEQGLRLAIPLECRKSSPGLASATSA) are excised as a propeptide.

This sequence belongs to the aerolysin family. In terms of assembly, homodimer in solution; homoheptamer in the host membrane. After binding to GPI-anchored proteins in target membranes and proteolytic removal of the C-terminal propeptide, the protein assembles into a heptameric pre-pore complex. A further conformation change leads to insertion into the host membrane. Post-translationally, proteolytic cleavage and subsequent release of the propeptide trigger a major conformation change, leading to the formation of a heptameric pre-pore that then inserts into the host membrane.

The protein localises to the secreted. It localises to the host cell membrane. In terms of biological role, secreted, cytolytic toxin that forms pores in host membranes after proteolytic removal of a C-terminal propeptide, leading to destruction of the membrane permeability barrier and cell death. The pores are formed by transmembrane beta-strands and are approximately 3 nm in diameter. In Aeromonas hydrophila, this protein is Aerolysin-5 (ahh5).